Reading from the N-terminus, the 1053-residue chain is Protein CLEC16A (1053 aa).

Residues I51–Y198 form the FPL domain. Disordered regions lie at residues S375–E434, S452–C471, and S892–L983. Basic residues predominate over residues H381 to N392. Positions S892 to P938 are enriched in low complexity.

It belongs to the CLEC16A/gop-1 family. Interacts with RNF41/NRDP1. In terms of tissue distribution, almost exclusively expressed in immune cells, including dendritic cells, B-lymphocytes and natural killer cells.

It is found in the endosome membrane. The protein resides in the lysosome membrane. In terms of biological role, regulator of mitophagy through the upstream regulation of the RNF41/NRDP1-PRKN pathway. Mitophagy is a selective form of autophagy necessary for mitochondrial quality control. The RNF41/NRDP1-PRKN pathway regulates autophagosome-lysosome fusion during late mitophagy. May protect RNF41/NRDP1 from proteasomal degradation, RNF41/NRDP1 which regulates proteasomal degradation of PRKN. Plays a key role in beta cells functions by regulating mitophagy/autophagy and mitochondrial health. This Homo sapiens (Human) protein is Protein CLEC16A.